The sequence spans 335 residues: Holliday junction branch migration complex subunit RuvB (335 aa).

Residues 4–184 (ADRIISTSAK…FGIVQRLEFY (181 aa)) form a large ATPase domain (RuvB-L) region. ATP-binding positions include I23, R24, G65, K68, T69, T70, 131–133 (EDY), R174, Y184, and R221. Mg(2+) is bound at residue T69. The segment at 185–255 (AVEDLTSIVA…SAKAALLMLD (71 aa)) is small ATPAse domain (RuvB-S). The head domain (RuvB-H) stretch occupies residues 258–335 (DAGFDYLDRK…RYFGLEKLTE (78 aa)). Residues R294, R313, and R318 each coordinate DNA.

It belongs to the RuvB family. Homohexamer. Forms an RuvA(8)-RuvB(12)-Holliday junction (HJ) complex. HJ DNA is sandwiched between 2 RuvA tetramers; dsDNA enters through RuvA and exits via RuvB. An RuvB hexamer assembles on each DNA strand where it exits the tetramer. Each RuvB hexamer is contacted by two RuvA subunits (via domain III) on 2 adjacent RuvB subunits; this complex drives branch migration. In the full resolvosome a probable DNA-RuvA(4)-RuvB(12)-RuvC(2) complex forms which resolves the HJ.

Its subcellular location is the cytoplasm. It carries out the reaction ATP + H2O = ADP + phosphate + H(+). The RuvA-RuvB-RuvC complex processes Holliday junction (HJ) DNA during genetic recombination and DNA repair, while the RuvA-RuvB complex plays an important role in the rescue of blocked DNA replication forks via replication fork reversal (RFR). RuvA specifically binds to HJ cruciform DNA, conferring on it an open structure. The RuvB hexamer acts as an ATP-dependent pump, pulling dsDNA into and through the RuvAB complex. RuvB forms 2 homohexamers on either side of HJ DNA bound by 1 or 2 RuvA tetramers; 4 subunits per hexamer contact DNA at a time. Coordinated motions by a converter formed by DNA-disengaged RuvB subunits stimulates ATP hydrolysis and nucleotide exchange. Immobilization of the converter enables RuvB to convert the ATP-contained energy into a lever motion, pulling 2 nucleotides of DNA out of the RuvA tetramer per ATP hydrolyzed, thus driving DNA branch migration. The RuvB motors rotate together with the DNA substrate, which together with the progressing nucleotide cycle form the mechanistic basis for DNA recombination by continuous HJ branch migration. Branch migration allows RuvC to scan DNA until it finds its consensus sequence, where it cleaves and resolves cruciform DNA. The protein is Holliday junction branch migration complex subunit RuvB of Pasteurella multocida (strain Pm70).